A 344-amino-acid chain; its full sequence is Uroporphyrinogen decarboxylase (344 aa).

Residues R26–R30, D76, Y152, S207, and H323 contribute to the substrate site.

This sequence belongs to the uroporphyrinogen decarboxylase family. As to quaternary structure, homodimer.

It is found in the cytoplasm. The enzyme catalyses uroporphyrinogen III + 4 H(+) = coproporphyrinogen III + 4 CO2. It functions in the pathway porphyrin-containing compound metabolism; protoporphyrin-IX biosynthesis; coproporphyrinogen-III from 5-aminolevulinate: step 4/4. Catalyzes the decarboxylation of four acetate groups of uroporphyrinogen-III to yield coproporphyrinogen-III. The sequence is that of Uroporphyrinogen decarboxylase from Hyphomonas neptunium (strain ATCC 15444).